Consider the following 132-residue polypeptide: Agouti-signaling protein (132 aa).

A signal peptide spans 1 to 22 (MDVTRLLLATLLVFLCFFTAYS). Asn-39 carries N-linked (GlcNAc...) asparagine glycosylation. The interval 62–88 (ISRKEAEKKRSSKKEASMKKVARPRTP) is disordered. Residues 63–79 (SRKEAEKKRSSKKEASM) are compositionally biased toward basic and acidic residues. 5 disulfides stabilise this stretch: Cys-93–Cys-108, Cys-100–Cys-114, Cys-107–Cys-125, Cys-111–Cys-132, and Cys-116–Cys-123. The Agouti domain occupies 93–132 (CVATRDSCKPPAPACCDPCASCQCRFFRSACSCRVLSLNC).

It localises to the secreted. Its function is as follows. Involved in the regulation of melanogenesis. The binding of ASP to MC1R precludes alpha-MSH initiated signaling and thus blocks production of cAMP, leading to a down-regulation of eumelanogenesis (brown/black pigment) and thus increasing synthesis of pheomelanin (yellow/red pigment). This chain is Agouti-signaling protein (ASIP), found in Macaca radiata (Bonnet macaque).